The following is a 208-amino-acid chain: Effector protein MavE (208 aa).

Positions 77 to 80 match the NPxY eukaryotic motif motif; the sequence is NPRY. Residues 184–204 traverse the membrane as a helical segment; the sequence is VLFPFVAATVAVAATAASVLF.

As to quaternary structure, homotrimer.

The protein resides in the secreted. It is found in the host vacuole. It localises to the host pathogen-containing vacuole. Its subcellular location is the host pathogen-containing vacuole membrane. Its function is as follows. Virulence effector that is indispensable for endoplasmic reticulum (ER)-mediated remodeling of the Legionella pneumophila-containing vacuole (LCV) and lysosomal evasion. Essential for intracellular replication in human monocyte-derived macrophages (hMDMs) and amoebae, as well as for intrapulmonary proliferation in mice. The sequence is that of Effector protein MavE from Legionella pneumophila subsp. pneumophila (strain Philadelphia 1 / ATCC 33152 / DSM 7513).